Reading from the N-terminus, the 698-residue chain is Phenylalanine aminomutase (L-beta-phenylalanine forming) (698 aa).

Y80 serves as the catalytic Proton donor/acceptor. Positions 175-177 (ASG) form a cross-link, 5-imidazolinone (Ala-Gly). S176 bears the 2,3-didehydroalanine (Ser) mark. (E)-cinnamate-binding residues include N231, Q319, R325, N355, K427, E455, and N458.

It belongs to the PAL/histidase family. Homotetramer. In terms of processing, contains an active site 4-methylidene-imidazol-5-one (MIO), which is formed autocatalytically by cyclization and dehydration of residues Ala-Ser-Gly.

Its subcellular location is the cytoplasm. The catalysed reaction is L-phenylalanine = L-beta-phenylalanine. It carries out the reaction L-phenylalanine = (E)-cinnamate + NH4(+). It functions in the pathway alkaloid biosynthesis; taxol biosynthesis. The protein operates within phenylpropanoid metabolism; trans-cinnamate biosynthesis; trans-cinnamate from L-phenylalanine: step 1/1. In terms of biological role, phenylalanine aminomutase that catalyzes the rearrangement of L-phenylalanine to R-beta-phenylalanine. Catalyzes the first committed step in the biosynthesis of the side chain of the alkaloid taxol (paclitaxel), a widely-used compound with antitumor activity. Also has low phenylalanine ammonia-lyase activity. The protein is Phenylalanine aminomutase (L-beta-phenylalanine forming) (pam) of Taxus canadensis (Canadian yew).